The chain runs to 432 residues: 2-oxoglutarate-dependent dioxygenase AOP2 (432 aa).

One can recognise a Fe2OG dioxygenase domain in the interval 281–378; that stretch reads SGDDVEANDD…RYTAAIFTCP (98 aa). Fe cation-binding residues include His-301, Asp-303, and His-358. A 2-oxoglutarate-binding site is contributed by Arg-369.

The protein belongs to the iron/ascorbate-dependent oxidoreductase family. It depends on Fe(2+) as a cofactor.

In terms of biological role, 2-oxoglutarate-dependent dioxygenase involved in glucosinolates biosynthesis. Catalyzes the conversion of methylsulfinylalkyl glucosinolates to alkenyl glucosinolates. The chain is 2-oxoglutarate-dependent dioxygenase AOP2 (AOP2) from Arabidopsis thaliana (Mouse-ear cress).